A 532-amino-acid chain; its full sequence is ATP synthase subunit alpha (532 aa).

171–178 (GDRQTGKT) contributes to the ATP binding site.

The protein belongs to the ATPase alpha/beta chains family. F-type ATPases have 2 components, CF(1) - the catalytic core - and CF(0) - the membrane proton channel. CF(1) has five subunits: alpha(3), beta(3), gamma(1), delta(1), epsilon(1). CF(0) has three main subunits: a(1), b(2) and c(9-12). The alpha and beta chains form an alternating ring which encloses part of the gamma chain. CF(1) is attached to CF(0) by a central stalk formed by the gamma and epsilon chains, while a peripheral stalk is formed by the delta and b chains.

It is found in the cell membrane. It carries out the reaction ATP + H2O + 4 H(+)(in) = ADP + phosphate + 5 H(+)(out). Functionally, produces ATP from ADP in the presence of a proton gradient across the membrane. The alpha chain is a regulatory subunit. This is ATP synthase subunit alpha from Amoebophilus asiaticus (strain 5a2).